An 83-amino-acid chain; its full sequence is Apolipoprotein C-I, acidic form (83 aa).

A signal peptide spans 1–26; the sequence is MRLFLSLPVLVVVLSMVLEGPAPAQG.

Belongs to the apolipoprotein C1 family.

It localises to the secreted. In Pan troglodytes (Chimpanzee), this protein is Apolipoprotein C-I, acidic form (APOC1A).